Consider the following 1037-residue polypeptide: Presequence protease, mitochondrial (1037 aa).

The transit peptide at 1–28 (MWRCGGRQGLCVLRRLSGGHAHHRAWRW) directs the protein to the mitochondrion. Residue H104 participates in Zn(2+) binding. The Proton acceptor role is filled by E107. A Zn(2+)-binding site is contributed by H108. A disulfide bridge links C119 with C556. E180 is a catalytic residue. E205 contacts Zn(2+). K759 carries the N6-acetyllysine modification. K770 is modified (N6-acetyllysine; alternate). At K770 the chain carries N6-succinyllysine; alternate. Over residues 804–814 (GRSKKERRPVR) the composition is skewed to basic residues. The tract at residues 804–834 (GRSKKERRPVRPHTVEKPVPSSSGGDAHVPH) is disordered. An N6-succinyllysine modification is found at K849. K884 is subject to N6-acetyllysine. N6-succinyllysine is present on K946.

This sequence belongs to the peptidase M16 family. PreP subfamily. As to quaternary structure, monomer and homodimer; homodimerization is induced by binding of the substrate. The cofactor is Zn(2+). Post-translationally, a disulfide bond locks the enzyme in the closed conformation preventing substrate entry into the catalytic chamber. As to expression, widely expressed. Expressed at higher level in muscle and heart compared to brain, pancreas, liver, lung and placenta.

It localises to the mitochondrion. The protein localises to the mitochondrion matrix. Mainly exists in a closed and catalytically competent conformation but a closed-to-open switch allows substrate entry into the catalytic chamber. Substrate binding induces closure and dimerization. A disulfide bond may lock the enzyme in a closed conformation preventing substrate entry into the catalytic chamber, participating in redox regulation of the enzyme. Inhibited by metal-chelating agents. Inhibited by nickel and zinc excess, and slightly activated by manganese. Metalloendopeptidase of the mitochondrial matrix that functions in peptide cleavage and degradation rather than in protein processing. Has an ATP-independent activity. Specifically cleaves peptides in the range of 5 to 65 residues. Shows a preference for cleavage after small polar residues and before basic residues, but without any positional preference. Degrades the transit peptides of mitochondrial proteins after their cleavage. Also degrades other unstructured peptides. It is also able to degrade amyloid-beta protein 40, one of the peptides produced by APP processing, when it accumulates in mitochondrion. It is a highly efficient protease, at least toward amyloid-beta protein 40. Cleaves that peptide at a specific position and is probably not processive, releasing digested peptides intermediates that can be further cleaved subsequently. It is also able to degrade amyloid-beta protein 42. This Homo sapiens (Human) protein is Presequence protease, mitochondrial.